Consider the following 255-residue polypeptide: 1-(5-phosphoribosyl)-5-[(5-phosphoribosylamino)methylideneamino] imidazole-4-carboxamide isomerase (255 aa).

Residue aspartate 8 is the Proton acceptor of the active site. Aspartate 129 (proton donor) is an active-site residue.

The protein belongs to the HisA/HisF family.

The protein localises to the cytoplasm. It catalyses the reaction 1-(5-phospho-beta-D-ribosyl)-5-[(5-phospho-beta-D-ribosylamino)methylideneamino]imidazole-4-carboxamide = 5-[(5-phospho-1-deoxy-D-ribulos-1-ylimino)methylamino]-1-(5-phospho-beta-D-ribosyl)imidazole-4-carboxamide. The protein operates within amino-acid biosynthesis; L-histidine biosynthesis; L-histidine from 5-phospho-alpha-D-ribose 1-diphosphate: step 4/9. This chain is 1-(5-phosphoribosyl)-5-[(5-phosphoribosylamino)methylideneamino] imidazole-4-carboxamide isomerase, found in Parasynechococcus marenigrum (strain WH8102).